The primary structure comprises 310 residues: NAD kinase 1 (310 aa).

The Proton acceptor role is filled by Asp-68. NAD(+)-binding positions include 68-69 (DG), 145-146 (NE), Arg-156, His-175, and Asp-177.

The protein belongs to the NAD kinase family. Requires a divalent metal cation as cofactor.

The protein localises to the cytoplasm. It catalyses the reaction NAD(+) + ATP = ADP + NADP(+) + H(+). In terms of biological role, involved in the regulation of the intracellular balance of NAD and NADP, and is a key enzyme in the biosynthesis of NADP. Catalyzes specifically the phosphorylation on 2'-hydroxyl of the adenosine moiety of NAD to yield NADP. This chain is NAD kinase 1, found in Gloeobacter violaceus (strain ATCC 29082 / PCC 7421).